The sequence spans 58 residues: Protein translocase subunit SecE (58 aa).

Residues 36 to 56 (ILLIGFIGFLMFAIMSLLPGV) form a helical membrane-spanning segment.

It belongs to the SecE/SEC61-gamma family. As to quaternary structure, component of the Sec protein translocase complex. Heterotrimer consisting of SecY (alpha), SecG (beta) and SecE (gamma) subunits. The heterotrimers can form oligomers, although 1 heterotrimer is thought to be able to translocate proteins. Interacts with the ribosome. May interact with SecDF, and other proteins may be involved.

It is found in the cell membrane. Essential subunit of the Sec protein translocation channel SecYEG. Clamps together the 2 halves of SecY. May contact the channel plug during translocation. The polypeptide is Protein translocase subunit SecE (Halorubrum lacusprofundi (strain ATCC 49239 / DSM 5036 / JCM 8891 / ACAM 34)).